A 130-amino-acid polypeptide reads, in one-letter code: Small ribosomal subunit protein uS9 (130 aa).

Residues 101-130 (AGLLTRDARMKERKKPGLKKARKASQFSKR) form a disordered region. The span at 111-130 (KERKKPGLKKARKASQFSKR) shows a compositional bias: basic residues.

Belongs to the universal ribosomal protein uS9 family.

In Levilactobacillus brevis (strain ATCC 367 / BCRC 12310 / CIP 105137 / JCM 1170 / LMG 11437 / NCIMB 947 / NCTC 947) (Lactobacillus brevis), this protein is Small ribosomal subunit protein uS9.